The following is a 479-amino-acid chain: Acetylcholine receptor subunit alpha-type acr-15 (479 aa).

An N-terminal signal peptide occupies residues 1–18 (MLLPILLHFLLLITQLNG). At 19-230 (SPAEVRLIND…HLRRRTLYYS (212 aa)) the chain is on the extracellular side. Asn60 and Asn92 each carry an N-linked (GlcNAc...) asparagine glycan. A disulfide bond links Cys146 and Cys160. N-linked (GlcNAc...) asparagine glycosylation occurs at Asn200. Cys208 and Cys209 are oxidised to a cystine. The helical transmembrane segment at 231–251 (FNLIAPVLLTMILVILGFTVS) threads the bilayer. Residues 252 to 257 (PETCEK) are Cytoplasmic-facing. The helical transmembrane segment at 258–278 (VGLQISVSLAICIFLTIMSEL) threads the bilayer. Residues 279–285 (TPQTSEA) lie on the Extracellular side of the membrane. Residues 286–306 (VPLLGVFFHTCNFISVLATSF) traverse the membrane as a helical segment. Topologically, residues 307-453 (TVYVQSFHFR…WRFAAIVVDR (147 aa)) are cytoplasmic. A helical membrane pass occupies residues 454 to 474 (LCLLAFSLLIVVVSIIIALRA). Topologically, residues 475-479 (PYLFA) are extracellular.

Belongs to the ligand-gated ion channel (TC 1.A.9) family. Acetylcholine receptor (TC 1.A.9.1) subfamily. Expressed in interneurons, motor neurons, pharyngeal neurons and muscles.

The protein resides in the cell membrane. Its subcellular location is the postsynaptic cell membrane. After binding acetylcholine, the AChR responds by an extensive change in conformation that affects all subunits and leads to opening of an ion-conducting channel across the plasma membrane. Activity is required in glutamatergic neurons to mediate nicotine-induced and nicotine-motivated behaviors. The polypeptide is Acetylcholine receptor subunit alpha-type acr-15 (Caenorhabditis elegans).